A 534-amino-acid polypeptide reads, in one-letter code: Solute carrier family 22 member 15 (534 aa).

A helical transmembrane segment spans residues 22–42 (FLLAVLLQLYSATEAIIITIL). Residues N52, N58, and N83 are each glycosylated (N-linked (GlcNAc...) asparagine). 11 helical membrane-spanning segments follow: residues 97-117 (AAYE…IGVI), 136-156 (LALE…PLFL), 161-181 (LVGV…NECI), 191-211 (SLGS…GYFI), 216-236 (LLAL…LCIP), 297-317 (TLIM…LTLS), 327-347 (LNLA…MYLI), 356-376 (GSLA…MLVP), 391-411 (TLSL…YIYS), 424-444 (MGVC…IPAL), and 450-470 (ALPF…SLLL). N513 carries an N-linked (GlcNAc...) asparagine glycan.

The protein belongs to the major facilitator (TC 2.A.1) superfamily. Organic cation transporter (TC 2.A.1.19) family.

Its subcellular location is the membrane. Probably transports organic cations. This is Solute carrier family 22 member 15 (slc22a15) from Xenopus tropicalis (Western clawed frog).